The primary structure comprises 80 residues: Ubiquitin-like protein NEDD8-like protein 2 (80 aa).

The protein belongs to the ubiquitin family.

This Dictyostelium discoideum (Social amoeba) protein is Ubiquitin-like protein NEDD8-like protein 2 (nedd8l2).